A 591-amino-acid chain; its full sequence is Aspartate--tRNA ligase (591 aa).

An L-aspartate-binding site is contributed by Glu-176. An aspartate region spans residues 200–203; it reads QILK. L-aspartate is bound at residue Arg-222. ATP-binding positions include 222 to 224 and Gln-231; that span reads RDE. An L-aspartate-binding site is contributed by His-450. Glu-484 contacts ATP. An L-aspartate-binding site is contributed by Arg-491. Residue 536 to 539 coordinates ATP; sequence GLDR.

It belongs to the class-II aminoacyl-tRNA synthetase family. Type 1 subfamily. As to quaternary structure, homodimer.

It localises to the cytoplasm. The enzyme catalyses tRNA(Asp) + L-aspartate + ATP = L-aspartyl-tRNA(Asp) + AMP + diphosphate. Catalyzes the attachment of L-aspartate to tRNA(Asp) in a two-step reaction: L-aspartate is first activated by ATP to form Asp-AMP and then transferred to the acceptor end of tRNA(Asp). In Listeria monocytogenes serotype 4b (strain F2365), this protein is Aspartate--tRNA ligase.